A 389-amino-acid chain; its full sequence is Phosphoglycerate kinase (389 aa).

Residues 21–23 (DLN), Arg36, 59–62 (HLGR), Arg112, and Arg145 contribute to the substrate site. Residues Lys196, Glu313, and 342–345 (GGDT) contribute to the ATP site.

It belongs to the phosphoglycerate kinase family. In terms of assembly, monomer.

It localises to the cytoplasm. The enzyme catalyses (2R)-3-phosphoglycerate + ATP = (2R)-3-phospho-glyceroyl phosphate + ADP. The protein operates within carbohydrate degradation; glycolysis; pyruvate from D-glyceraldehyde 3-phosphate: step 2/5. The chain is Phosphoglycerate kinase from Histophilus somni (strain 2336) (Haemophilus somnus).